The sequence spans 327 residues: Voltage-dependent calcium channel gamma-4 subunit (327 aa).

Residues 1–9 (MVRCDRGLQ) lie on the Cytoplasmic side of the membrane. A helical transmembrane segment spans residues 10–30 (MLLTTAGAFAAFSLMAIAIGT). Residues 31–107 (DYWLYSSAHI…EYLLRIVRAS (77 aa)) lie on the Extracellular side of the membrane. Asn42 and Asn45 each carry an N-linked (GlcNAc...) asparagine glycan. Residues 108 to 128 (SVFPILSTILLLLGGLCIGAG) traverse the membrane as a helical segment. Over 129–136 (RIYSRKNN) the chain is Cytoplasmic. The chain crosses the membrane as a helical span at residues 137-157 (IVLSAGILFVAAGLSNIIGII). At 158-186 (VYISSNTGDPSDKRDEDKKNHYNYGWSFY) the chain is on the extracellular side. Residues 187–207 (FGALSFIVAETVGVLAVNIYI) form a helical membrane-spanning segment. At 208 to 327 (EKNKELRFKT…SMLNRRTTPV (120 aa)) the chain is on the cytoplasmic side. Residues 235–261 (SYRYRRRRSRSSSRSTEASPSRDVSPM) are disordered. A compositionally biased stretch (low complexity) spans 246 to 256 (SSRSTEASPSR). Ser259 carries the post-translational modification Phosphoserine.

The protein belongs to the PMP-22/EMP/MP20 family. CACNG subfamily. Interacts with CACNA1C. Identified in a complex with the L-type calcium channel subunits CACNA1C, CACNA2D1 and either CACNB1 or CACNB2. Acts as an auxiliary subunit for AMPA-selective glutamate receptors (AMPARs). Interacts with GRIA1. As to expression, detected in heart left ventricle.

It is found in the cell membrane. Regulates the activity of L-type calcium channels that contain CACNA1C as pore-forming subunit. Regulates the trafficking and gating properties of AMPA-selective glutamate receptors (AMPARs), including GRIA1 and GRIA4. Promotes their targeting to the cell membrane and synapses and modulates their gating properties by slowing their rates of activation, deactivation and desensitization and by mediating their resensitization. The protein is Voltage-dependent calcium channel gamma-4 subunit (CACNG4) of Homo sapiens (Human).